Consider the following 137-residue polypeptide: Acidic phospholipase A2 beta-bungarotoxin A chain (137 aa).

Residues 1 to 9 (AVCVSLLGA) form the signal peptide. Positions 10–17 (ANIPPHPL) are excised as a propeptide. Intrachain disulfides connect Cys44/Cys136, Cys46/Cys62, Cys61/Cys117, Cys68/Cys110, Cys78/Cys103, and Cys96/Cys108. Ca(2+) contacts are provided by Tyr45, Gly47, and Gly49. Residue His65 is part of the active site. Asp66 is a binding site for Ca(2+). Residue Asp111 is part of the active site.

Belongs to the phospholipase A2 family. Group I subfamily. D49 sub-subfamily. Heterodimer; disulfide-linked. The A chain has phospholipase A2 activity and the B chain shows homology with the basic protease inhibitors. Ca(2+) serves as cofactor. Expressed by the venom gland.

The protein localises to the secreted. The enzyme catalyses a 1,2-diacyl-sn-glycero-3-phosphocholine + H2O = a 1-acyl-sn-glycero-3-phosphocholine + a fatty acid + H(+). Functionally, beta bungarotoxin is a presynaptic neurotoxin. The A chain has phospholipase activity. PLA2 catalyzes the calcium-dependent hydrolysis of the 2-acyl groups in 3-sn-phosphoglycerides. The polypeptide is Acidic phospholipase A2 beta-bungarotoxin A chain (Bungarus candidus (Malayan krait)).